Reading from the N-terminus, the 424-residue chain is Mitogen-activated protein kinase 9 (424 aa).

The 296-residue stretch at 26–321 (YQQLKPIGSG…VDEALRHPYI (296 aa)) folds into the Protein kinase domain. ATP contacts are provided by residues 32-40 (IGSGAQGIV) and K55. Catalysis depends on D151, which acts as the Proton acceptor. T183 carries the phosphothreonine; by MAP2K7 modification. The TXY signature appears at 183–185 (TPY). At Y185 the chain carries Phosphotyrosine; by MAP2K4. A disordered region spans residues 368-424 (KNGVVKDQPSDAAVSSNATPSQSSSINDISSMSTEQTLASDTDSSLDASTGPLEGCR). Over residues 388-417 (SQSSSINDISSMSTEQTLASDTDSSLDAST) the composition is skewed to low complexity.

Belongs to the protein kinase superfamily. CMGC Ser/Thr protein kinase family. MAP kinase subfamily. Interacts with MECOM. Interacts with DCLK2. Binds to at least four scaffolding proteins, MAPK8IP1/JIP-1, MAPK8IP2/JIP-2, MAPK8IP3/JIP-3/JSAP1 and SPAG9/MAPK8IP4/JIP-4. These proteins also bind other components of the JNK signaling pathway. Interacts with NFATC4. Interacts with ATF7; the interaction does not phosphorylate ATF7 but acts as a docking site for ATF7-associated partners such as JUN. Interacts with BCL10. Interacts with CTNNB1 and GSK3B. Interacts with MAPKBP1. Interacts with POU5F1; phosphorylates POU5F1 at 'Ser-355'. Found in a complex with SH3RF1, RAC2, MAP3K7/TAK1, MAP2K7/MKK7, MAPK8IP1/JIP1 and MAPK8/JNK1. Mg(2+) serves as cofactor. In terms of processing, dually phosphorylated on Thr-183 and Tyr-185 by MAP2K7 and MAP2K4, which activates the enzyme. Autophosphorylated in vitro.

It is found in the cytoplasm. The protein resides in the nucleus. It catalyses the reaction L-seryl-[protein] + ATP = O-phospho-L-seryl-[protein] + ADP + H(+). The catalysed reaction is L-threonyl-[protein] + ATP = O-phospho-L-threonyl-[protein] + ADP + H(+). Its activity is regulated as follows. Activated by threonine and tyrosine phosphorylation by either of two dual specificity kinases, MAP2K4 and MAP2K7. MAP2K4 shows a strong preference for Tyr-185 while MAP2K7 phosphorylates Tyr-183 preferentially. Inhibited by dual specificity phosphatases, such as DUSP1. In terms of biological role, serine/threonine-protein kinase involved in various processes such as cell proliferation, differentiation, migration, transformation and programmed cell death. Extracellular stimuli such as pro-inflammatory cytokines or physical stress stimulate the stress-activated protein kinase/c-Jun N-terminal kinase (SAP/JNK) signaling pathway. In this cascade, two dual specificity kinases MAP2K4/MKK4 and MAP2K7/MKK7 phosphorylate and activate MAPK9/JNK2. In turn, MAPK9/JNK2 phosphorylates a number of transcription factors, primarily components of AP-1 such as JUN and ATF2 and thus regulates AP-1 transcriptional activity. In response to oxidative or ribotoxic stresses, inhibits rRNA synthesis by phosphorylating and inactivating the RNA polymerase 1-specific transcription initiation factor RRN3. Promotes stressed cell apoptosis by phosphorylating key regulatory factors including TP53 and YAP1. In T-cells, MAPK8 and MAPK9 are required for polarized differentiation of T-helper cells into Th1 cells. Upon T-cell receptor (TCR) stimulation, is activated by CARMA1, BCL10, MAP2K7 and MAP3K7/TAK1 to regulate JUN protein levels. Plays an important role in the osmotic stress-induced epithelial tight-junctions disruption. When activated, promotes beta-catenin/CTNNB1 degradation and inhibits the canonical Wnt signaling pathway. Also participates in neurite growth in spiral ganglion neurons. Phosphorylates the CLOCK-BMAL1 heterodimer and plays a role in the regulation of the circadian clock. Phosphorylates POU5F1, which results in the inhibition of POU5F1's transcriptional activity and enhances its proteasomal degradation. Phosphorylates ALKBH5 in response to reactive oxygen species (ROS), promoting ALKBH5 sumoylation and inactivation. MAPK9 isoforms display different binding patterns: alpha-1 and alpha-2 preferentially bind to JUN, whereas beta-1 and beta-2 bind to ATF2. However, there is no correlation between binding and phosphorylation, which is achieved at about the same efficiency by all isoforms. JUNB is not a substrate for JNK2 alpha-2, and JUND binds only weakly to it. In Homo sapiens (Human), this protein is Mitogen-activated protein kinase 9 (MAPK9).